The chain runs to 193 residues: Bcl-2-like protein 2 (193 aa).

The residue at position 2 (A2) is an N-acetylalanine. A BH4 motif is present at residues 9-29 (DTRALVADFVGYKLRQKGYVC). The BH1 motif lies at 85-104 (ELFQGGPNWGRLVAFFVFGA). A BH2 motif is present at residues 136 to 151 (DWIHSSGGWAEFTALY).

Belongs to the Bcl-2 family. In terms of assembly, interacts with HIF3A isoform 2 (via C-terminus domain). Interacts with BOP. As to expression, expressed in almost all myeloid cell lines and in a wide range of tissues, with highest levels in brain, colon, and salivary gland.

It localises to the mitochondrion membrane. In terms of biological role, promotes cell survival. Blocks dexamethasone-induced apoptosis. Mediates survival of postmitotic Sertoli cells by suppressing death-promoting activity of BAX. The chain is Bcl-2-like protein 2 (Bcl2l2) from Mus musculus (Mouse).